The following is a 313-amino-acid chain: Ribosomal RNA small subunit methyltransferase H (313 aa).

Residues 35-37 (GGH), Asp-55, Phe-81, Asp-103, and Gln-110 contribute to the S-adenosyl-L-methionine site.

The protein belongs to the methyltransferase superfamily. RsmH family.

The protein resides in the cytoplasm. The catalysed reaction is cytidine(1402) in 16S rRNA + S-adenosyl-L-methionine = N(4)-methylcytidine(1402) in 16S rRNA + S-adenosyl-L-homocysteine + H(+). Its function is as follows. Specifically methylates the N4 position of cytidine in position 1402 (C1402) of 16S rRNA. This is Ribosomal RNA small subunit methyltransferase H from Pseudomonas aeruginosa (strain UCBPP-PA14).